The following is a 324-amino-acid chain: Ribosomal RNA small subunit methyltransferase H (324 aa).

S-adenosyl-L-methionine contacts are provided by residues 35–37 (GGH), Asp-55, Phe-85, Asp-103, and Gln-110.

Belongs to the methyltransferase superfamily. RsmH family.

It is found in the cytoplasm. The enzyme catalyses cytidine(1402) in 16S rRNA + S-adenosyl-L-methionine = N(4)-methylcytidine(1402) in 16S rRNA + S-adenosyl-L-homocysteine + H(+). Functionally, specifically methylates the N4 position of cytidine in position 1402 (C1402) of 16S rRNA. This Solidesulfovibrio magneticus (strain ATCC 700980 / DSM 13731 / RS-1) (Desulfovibrio magneticus) protein is Ribosomal RNA small subunit methyltransferase H.